The following is a 447-amino-acid chain: Probable asparagine--tRNA ligase, cytoplasmic (447 aa).

The protein belongs to the class-II aminoacyl-tRNA synthetase family.

It is found in the cytoplasm. It carries out the reaction tRNA(Asn) + L-asparagine + ATP = L-asparaginyl-tRNA(Asn) + AMP + diphosphate + H(+). The polypeptide is Probable asparagine--tRNA ligase, cytoplasmic (Vairimorpha ceranae (strain BRL01) (Microsporidian parasite)).